A 483-amino-acid chain; its full sequence is Threonine synthase-like 2 (483 aa).

N6-(pyridoxal phosphate)lysine is present on lysine 113.

It belongs to the threonine synthase family. Pyridoxal 5'-phosphate serves as cofactor.

Its function is as follows. Acts as a catabolic phospho-lyase on both gamma- and beta-phosphorylated substrates. Degrades O-phospho-threonine (PThr) to alpha-ketobutyrate, ammonia and phosphate. Also degrades O-phospho-homoserine (PHS), but this is not its physiological substrate. The sequence is that of Threonine synthase-like 2 (Thnsl2) from Mus musculus (Mouse).